The following is a 96-amino-acid chain: Evasin P1074 (96 aa).

The signal sequence occupies residues 1–28 (MAFNMITFLQMAVFVVILFNINLHSASA). 3 cysteine pairs are disulfide-bonded: Cys-48/Cys-67, Cys-52/Cys-69, and Cys-63/Cys-80. N-linked (GlcNAc...) asparagine glycosylation is present at Asn-74.

It is found in the secreted. Salivary chemokine-binding protein which binds to host chemokines CXCL1 and CXCL8. This Ixodes ricinus (Common tick) protein is Evasin P1074.